Consider the following 485-residue polypeptide: GTPase Der (485 aa).

EngA-type G domains are found at residues 3 to 167 (PTIA…PEPE) and 176 to 349 (PVFA…NAAM). GTP contacts are provided by residues 9–16 (GRPNVGKS), 56–60 (DTGGF), 119–122 (NKGE), 182–189 (GRPNVGKS), 229–233 (DTAGV), and 294–297 (NKWD). Residues 350-434 (IKMPTPKITR…PLRIQYNVSE (85 aa)) form the KH-like domain. Residues 435-485 (NPYENAEDKPKKKPLRRVSLSNRIEKREGRKEEKNRFKKKTKVSVKKQFSK) form a disordered region. Residues 457–469 (RIEKREGRKEEKN) show a composition bias toward basic and acidic residues. Basic residues predominate over residues 470 to 485 (RFKKKTKVSVKKQFSK).

The protein belongs to the TRAFAC class TrmE-Era-EngA-EngB-Septin-like GTPase superfamily. EngA (Der) GTPase family. Associates with the 50S ribosomal subunit.

GTPase that plays an essential role in the late steps of ribosome biogenesis. The polypeptide is GTPase Der (Neisseria gonorrhoeae (strain NCCP11945)).